Here is a 163-residue protein sequence, read N- to C-terminus: CASP-like protein 1C2 (163 aa).

The Cytoplasmic portion of the chain corresponds to 1–7 (MAKLHRL). Residues 8 to 28 (ISAVLRLAAAGAAAAAAVIMV) traverse the membrane as a helical segment. The Extracellular segment spans residues 29–50 (TSHETTSLFGIEMEAKYSYTPS). Residues 51–71 (FVFFVVAFAVTFAYSLLAAVL) traverse the membrane as a helical segment. The Cytoplasmic portion of the chain corresponds to 72 to 80 (VRPGTTASR). A helical membrane pass occupies residues 81 to 101 (LVLLSDVTVGMLLTGAVAATG). The Extracellular segment spans residues 102 to 129 (AISQVGKSGNEHAGWLPICAQVQAYCGH). A helical transmembrane segment spans residues 130–150 (VMGALIAGFVSLLLYFLIIMY). Residues 151–163 (SLHAVAEPLCSCH) lie on the Cytoplasmic side of the membrane.

Belongs to the Casparian strip membrane proteins (CASP) family. In terms of assembly, homodimer and heterodimers.

Its subcellular location is the cell membrane. This chain is CASP-like protein 1C2, found in Zea mays (Maize).